The chain runs to 264 residues: Undecaprenyl-diphosphatase (264 aa).

8 helical membrane passes run 1 to 21, 39 to 59, 87 to 107, 111 to 131, 144 to 164, 187 to 207, 208 to 228, and 244 to 264; these read MDLIHVVVLALIQGITEFLPI, QGLAFDVAVHVGTLTAVAVYF, WYLIAATIPAALFGLIFDDLI, LRSTDVIATTTLVFGVLLWVA, IALSTAMIIGLAQAVALIPGT, FSFLLSIPVIVLSGGYKGLQL, VLSAAAVDWLAIGLGIALSAV, and IGMLPFVIYRLLLGVLLFIAV.

Belongs to the UppP family.

Its subcellular location is the cell inner membrane. It catalyses the reaction di-trans,octa-cis-undecaprenyl diphosphate + H2O = di-trans,octa-cis-undecaprenyl phosphate + phosphate + H(+). Catalyzes the dephosphorylation of undecaprenyl diphosphate (UPP). Confers resistance to bacitracin. The protein is Undecaprenyl-diphosphatase of Teredinibacter turnerae (strain ATCC 39867 / T7901).